The chain runs to 119 residues: Iron-sulfur cluster insertion protein ErpA (119 aa).

Positions 47, 111, and 113 each coordinate iron-sulfur cluster.

It belongs to the HesB/IscA family. Homodimer. Iron-sulfur cluster serves as cofactor.

Its function is as follows. Required for insertion of 4Fe-4S clusters for at least IspG. The protein is Iron-sulfur cluster insertion protein ErpA of Alcanivorax borkumensis (strain ATCC 700651 / DSM 11573 / NCIMB 13689 / SK2).